A 143-amino-acid polypeptide reads, in one-letter code: Large ribosomal subunit protein uL11 (143 aa).

The protein belongs to the universal ribosomal protein uL11 family. Part of the ribosomal stalk of the 50S ribosomal subunit. Interacts with L10 and the large rRNA to form the base of the stalk. L10 forms an elongated spine to which L12 dimers bind in a sequential fashion forming a multimeric L10(L12)X complex. In terms of processing, one or more lysine residues are methylated.

In terms of biological role, forms part of the ribosomal stalk which helps the ribosome interact with GTP-bound translation factors. In Treponema denticola (strain ATCC 35405 / DSM 14222 / CIP 103919 / JCM 8153 / KCTC 15104), this protein is Large ribosomal subunit protein uL11.